A 111-amino-acid polypeptide reads, in one-letter code: Putative pterin-4-alpha-carbinolamine dehydratase (111 aa).

It belongs to the pterin-4-alpha-carbinolamine dehydratase family.

The enzyme catalyses (4aS,6R)-4a-hydroxy-L-erythro-5,6,7,8-tetrahydrobiopterin = (6R)-L-erythro-6,7-dihydrobiopterin + H2O. This is Putative pterin-4-alpha-carbinolamine dehydratase from Chlorobaculum tepidum (strain ATCC 49652 / DSM 12025 / NBRC 103806 / TLS) (Chlorobium tepidum).